We begin with the raw amino-acid sequence, 547 residues long: MAAKDVKFGNDARVKMLKGVNVLADAVKVTLGPKGRNVVLDKAYGAPTITKDGVSVAREIELEDKFENMGAQMVKEVASKANDAAGDGTTTATVLAQAIVNEGLKAVAAGMNPMDLKRGIDKAVVAVVEELKAISKPCETSKEIEQVGTISANSDETVGKLIAQAMEKVGKEGVITVEDGTGLDDALDVVEGMQFDRGYLSPYFINKPEAGTVELENPYIILVDKKISNIREILPVLEAVAKAGKPLLIVAEDIEGEALATLVVNTMRGIVKVAAVKAPGFGDRRKAMLQDIAILTAGTVISEEIGMELEKATLEELGQAKRVVITKDNTTIIDGIGDEAQIKARVAQIRQQIEDSTSDYDKEKLQERVAKLACGVAVIKVGAATEVAMKEKKDRVDDALHATRAAVEEGIVPGGGVALVRAASKVAATLTGDNEEQNVGIKLALRAMEAPLRQIVTNAGEEASVVARNVKDGNGNYGYNAGTEQYGDMLEMGILDPTKVTRSALQFAASIAGLMITTECMITDLPKEEKLDPAAAMGGMGGMGGMI.

ATP is bound by residues 30–33 (TLGP), K51, 87–91 (DGTTT), G415, and D496.

Belongs to the chaperonin (HSP60) family. As to quaternary structure, forms a cylinder of 14 subunits composed of two heptameric rings stacked back-to-back. Interacts with the co-chaperonin GroES.

It localises to the cytoplasm. It carries out the reaction ATP + H2O + a folded polypeptide = ADP + phosphate + an unfolded polypeptide.. Together with its co-chaperonin GroES, plays an essential role in assisting protein folding. The GroEL-GroES system forms a nano-cage that allows encapsulation of the non-native substrate proteins and provides a physical environment optimized to promote and accelerate protein folding. This chain is Chaperonin GroEL, found in Actinobacillus pleuropneumoniae serotype 5b (strain L20).